A 1020-amino-acid polypeptide reads, in one-letter code: LLGL scribble cell polarity complex component 2 (1020 aa).

14 WD repeats span residues 36–69, 76–117, 132–169, 193–227, 233–264, 282–324, 332–364, 386–462, 506–581, 590–651, 710–766, 775–827, 832–884, and 898–921; these read SALG…FMGL, VTQV…IGRF, VTAV…ENNI, TLHE…VQHF, LESV…GEDP, AISK…KTHE, IIDF…VVDL, TCSH…YKLS, QKIH…FALV, TAIA…LRQS, VRTL…KEIQ, GLVV…VSSK, LTAV…VHYP, and VFTK…SLST. The tract at residues 935–968 is disordered; it reads LQMRSKSPSSPVHRDLPDGVPTEHRNFKGDSEGY. The segment covering 946–965 has biased composition (basic and acidic residues); sequence VHRDLPDGVPTEHRNFKGDS.

This sequence belongs to the WD repeat L(2)GL family. Phosphorylated.

The protein localises to the cytoplasm. Its subcellular location is the cytoskeleton. Functionally, essential for hemidesmosome formation and maintenance of the cytoskeleton elements as well as cellular morphology in the basal epidermis during development. Also involved in regulating growth of the basal epidermis. The polypeptide is LLGL scribble cell polarity complex component 2 (llgl2) (Danio rerio (Zebrafish)).